Here is a 393-residue protein sequence, read N- to C-terminus: Decapping nuclease dom-3 (393 aa).

Residues 1-37 (MSHYGGNPRGNSSHQFGRKDFQQSDSKHIPKITGQPL) form a disordered region. The segment covering 17-28 (GRKDFQQSDSKH) has biased composition (basic and acidic residues). Substrate-binding positions include Arg74, Glu113, and 144-146 (WRG). Residues Glu205, Glu257, Asp259, Glu269, and Leu270 each contribute to the Mg(2+) site. Residue Glu257 participates in substrate binding. Substrate is bound by residues Lys271 and Gln293.

The protein belongs to the DXO/Dom3Z family. It depends on Mg(2+) as a cofactor.

The catalysed reaction is a 5'-end NAD(+)-phospho-ribonucleoside in mRNA + H2O = a 5'-end phospho-ribonucleoside in mRNA + NAD(+) + H(+). The enzyme catalyses a 5'-end (N(7)-methyl 5'-triphosphoguanosine)-ribonucleoside-ribonucleotide in mRNA + H2O = a (N(7)-methyl 5'-triphosphoguanosine)-nucleoside + a 5'-end phospho-ribonucleoside in mRNA + H(+). It carries out the reaction a 5'-end triphospho-ribonucleoside in mRNA + H2O = a 5'-end phospho-ribonucleoside in mRNA + diphosphate + H(+). Its function is as follows. Decapping enzyme for NAD-capped RNAs: specifically hydrolyzes the nicotinamide adenine dinucleotide (NAD) cap from a subset of RNAs by removing the entire NAD moiety from the 5'-end of an NAD-capped RNA. The NAD-cap is present at the 5'-end of some RNAs and snoRNAs. In contrast to the canonical 5'-end N7 methylguanosine (m7G) cap, the NAD cap promotes mRNA decay. Also acts as a non-canonical decapping enzyme that removes the entire cap structure of m7G capped or incompletely capped RNAs and mediates their subsequent degradation. Specifically degrades pre-mRNAs with a defective 5'-end m7G cap and is part of a pre-mRNA capping quality control. Also possesses RNA 5'-pyrophosphohydrolase activity by hydrolyzing the 5'-end triphosphate to release pyrophosphates. This is Decapping nuclease dom-3 from Caenorhabditis elegans.